Reading from the N-terminus, the 654-residue chain is Arrestin domain-containing protein C (654 aa).

Residues 1-105 form the C2 domain; the sequence is MTQRSLKINI…AKRNLMDQWL (105 aa). The stretch at 616–647 forms a coiled coil; it reads AKRIFLKIQQIQSERQKQQEQQEQQVVSNLEA.

This sequence belongs to the arrestin family.

The polypeptide is Arrestin domain-containing protein C (adcC) (Dictyostelium discoideum (Social amoeba)).